A 489-amino-acid chain; its full sequence is FAD-containing monooxygenase EthA (489 aa).

FAD-binding positions include Ser15, Glu36, 44 to 47, Asp56, and Val104; that span reads TWDL. 54–56 contacts NADP(+); the sequence is RSD. Residues 183–189 and 207–208 each bind NADP(+); these read SGATAVT and RS.

This sequence belongs to the FAD-binding monooxygenase family. The cofactor is FAD.

Its subcellular location is the cell membrane. The enzyme catalyses ethionamide + NADPH + O2 + H(+) = ethionamide S-oxide + NADP(+) + H2O. Its function is as follows. Monooxygenase able to convert a wide range of ketones to the corresponding esters or lactones via a Baeyer-Villiger oxidation reaction. Can act on long-chain aliphatic ketones (2-hexanone to 2-dodecanone) and on aromatic ketones (phenylacetone and benzylacetone). Is also able to catalyze enantioselective sulfoxidation of methyl-p-tolylsulfide. In vivo, likely functions as a BVMO, but the exact nature of the physiological substrate(s) remains to be established. In terms of biological role, is responsible for the activation of several thiocarbamide-containing pro-drugs, such as ethionamide (ETH), isoxyl (ISO) and thiacetazone (TAC), into reactive species. This chain is FAD-containing monooxygenase EthA (ethA), found in Mycobacterium bovis (strain ATCC BAA-935 / AF2122/97).